Here is a 121-residue protein sequence, read N- to C-terminus: Large ribosomal subunit protein eL34A (121 aa).

This sequence belongs to the eukaryotic ribosomal protein eL34 family. In terms of assembly, component of the large ribosomal subunit (LSU). Mature yeast ribosomes consist of a small (40S) and a large (60S) subunit. The 40S small subunit contains 1 molecule of ribosomal RNA (18S rRNA) and 33 different proteins (encoded by 57 genes). The large 60S subunit contains 3 rRNA molecules (25S, 5.8S and 5S rRNA) and 46 different proteins (encoded by 81 genes).

It localises to the cytoplasm. In terms of biological role, component of the ribosome, a large ribonucleoprotein complex responsible for the synthesis of proteins in the cell. The small ribosomal subunit (SSU) binds messenger RNAs (mRNAs) and translates the encoded message by selecting cognate aminoacyl-transfer RNA (tRNA) molecules. The large subunit (LSU) contains the ribosomal catalytic site termed the peptidyl transferase center (PTC), which catalyzes the formation of peptide bonds, thereby polymerizing the amino acids delivered by tRNAs into a polypeptide chain. The nascent polypeptides leave the ribosome through a tunnel in the LSU and interact with protein factors that function in enzymatic processing, targeting, and the membrane insertion of nascent chains at the exit of the ribosomal tunnel. This chain is Large ribosomal subunit protein eL34A, found in Saccharomyces cerevisiae (strain ATCC 204508 / S288c) (Baker's yeast).